The primary structure comprises 356 residues: Probable arabinogalactan endo-beta-1,4-galactanase A (356 aa).

The first 21 residues, 1-21, serve as a signal peptide directing secretion; the sequence is MLGKTVLLPLLVLLCHSLASA. N-linked (GlcNAc...) asparagine glycosylation occurs at Asn-133. Glu-157 acts as the Proton donor in catalysis. The Nucleophile role is filled by Glu-268.

The protein belongs to the glycosyl hydrolase 53 family.

The protein resides in the secreted. The enzyme catalyses The enzyme specifically hydrolyzes (1-&gt;4)-beta-D-galactosidic linkages in type I arabinogalactans.. In terms of biological role, endogalactanase involved in the degradation of plant cell wall polysaccharides, and more particularly of hairy regions of pectin. This is Probable arabinogalactan endo-beta-1,4-galactanase A (galA) from Aspergillus fumigatus (strain CBS 144.89 / FGSC A1163 / CEA10) (Neosartorya fumigata).